A 311-amino-acid chain; its full sequence is Thymidylate synthase (311 aa).

Residues Arg-28 and Arg-172 to Arg-173 contribute to the dUMP site. Cys-192 acts as the Nucleophile in catalysis. DUMP contacts are provided by residues Arg-213–Asp-216, Asn-224, and His-254–Tyr-256. Asp-216 is a (6R)-5,10-methylene-5,6,7,8-tetrahydrofolate binding site. (6R)-5,10-methylene-5,6,7,8-tetrahydrofolate is bound at residue Ala-310.

Belongs to the thymidylate synthase family. Bacterial-type ThyA subfamily. Homodimer.

Its subcellular location is the cytoplasm. The catalysed reaction is dUMP + (6R)-5,10-methylene-5,6,7,8-tetrahydrofolate = 7,8-dihydrofolate + dTMP. The protein operates within pyrimidine metabolism; dTTP biosynthesis. Catalyzes the reductive methylation of 2'-deoxyuridine-5'-monophosphate (dUMP) to 2'-deoxythymidine-5'-monophosphate (dTMP) while utilizing 5,10-methylenetetrahydrofolate (mTHF) as the methyl donor and reductant in the reaction, yielding dihydrofolate (DHF) as a by-product. This enzymatic reaction provides an intracellular de novo source of dTMP, an essential precursor for DNA biosynthesis. This chain is Thymidylate synthase, found in Sphingopyxis alaskensis (strain DSM 13593 / LMG 18877 / RB2256) (Sphingomonas alaskensis).